The chain runs to 546 residues: Chaperonin GroEL (546 aa).

ATP-binding positions include 29-32, K50, 86-90, G414, and D492; these read TMGP and DGTTT.

This sequence belongs to the chaperonin (HSP60) family. In terms of assembly, forms a cylinder of 14 subunits composed of two heptameric rings stacked back-to-back. Interacts with the co-chaperonin GroES.

It localises to the cytoplasm. The catalysed reaction is ATP + H2O + a folded polypeptide = ADP + phosphate + an unfolded polypeptide.. Its function is as follows. Together with its co-chaperonin GroES, plays an essential role in assisting protein folding. The GroEL-GroES system forms a nano-cage that allows encapsulation of the non-native substrate proteins and provides a physical environment optimized to promote and accelerate protein folding. In Helicobacter pylori (strain J99 / ATCC 700824) (Campylobacter pylori J99), this protein is Chaperonin GroEL.